Consider the following 501-residue polypeptide: Ammonium transporter 2 member 2 (501 aa).

A run of 11 helical transmembrane segments spans residues Val-35–Ile-55, Ser-64–Phe-84, Leu-140–Leu-160, Leu-174–Tyr-194, Gly-203–Gly-223, Ile-238–Gly-258, Thr-274–Gly-294, Val-298–Leu-318, Trp-322–Leu-342, Leu-356–Leu-376, and Phe-412–Ile-432.

This sequence belongs to the ammonia transporter channel (TC 1.A.11.2) family.

It localises to the membrane. Functionally, involved in ammonium transport. This Oryza sativa subsp. japonica (Rice) protein is Ammonium transporter 2 member 2 (AMT2-2).